We begin with the raw amino-acid sequence, 38 residues long: Cytochrome b559 subunit beta (38 aa).

Residues 13 to 29 (WLAVHALAVPTVFFLGS) form a helical membrane-spanning segment. Histidine 17 is a heme binding site.

It belongs to the PsbE/PsbF family. Heterodimer of an alpha subunit and a beta subunit. PSII is composed of 1 copy each of membrane proteins PsbA, PsbB, PsbC, PsbD, PsbE, PsbF, PsbH, PsbI, PsbJ, PsbK, PsbL, PsbM, PsbT, PsbX, PsbY, PsbZ, Psb30/Ycf12, at least 3 peripheral proteins of the oxygen-evolving complex and a large number of cofactors. It forms dimeric complexes. Requires heme b as cofactor.

Its subcellular location is the plastid. The protein localises to the chloroplast thylakoid membrane. Functionally, this b-type cytochrome is tightly associated with the reaction center of photosystem II (PSII). PSII is a light-driven water:plastoquinone oxidoreductase that uses light energy to abstract electrons from H(2)O, generating O(2) and a proton gradient subsequently used for ATP formation. It consists of a core antenna complex that captures photons, and an electron transfer chain that converts photonic excitation into a charge separation. The chain is Cytochrome b559 subunit beta from Ostreococcus tauri.